A 1075-amino-acid chain; its full sequence is DNA-directed RNA polymerase subunit beta (1075 aa).

The protein belongs to the RNA polymerase beta chain family. In plastids the minimal PEP RNA polymerase catalytic core is composed of four subunits: alpha, beta, beta', and beta''. When a (nuclear-encoded) sigma factor is associated with the core the holoenzyme is formed, which can initiate transcription.

Its subcellular location is the plastid. The protein localises to the chloroplast. The catalysed reaction is RNA(n) + a ribonucleoside 5'-triphosphate = RNA(n+1) + diphosphate. DNA-dependent RNA polymerase catalyzes the transcription of DNA into RNA using the four ribonucleoside triphosphates as substrates. In Zea mays (Maize), this protein is DNA-directed RNA polymerase subunit beta.